A 98-amino-acid polypeptide reads, in one-letter code: Co-chaperonin GroES (98 aa).

It belongs to the GroES chaperonin family. As to quaternary structure, heptamer of 7 subunits arranged in a ring. Interacts with the chaperonin GroEL.

It is found in the cytoplasm. In terms of biological role, together with the chaperonin GroEL, plays an essential role in assisting protein folding. The GroEL-GroES system forms a nano-cage that allows encapsulation of the non-native substrate proteins and provides a physical environment optimized to promote and accelerate protein folding. GroES binds to the apical surface of the GroEL ring, thereby capping the opening of the GroEL channel. The chain is Co-chaperonin GroES from Bartonella bacilliformis (strain ATCC 35685 / KC583 / Herrer 020/F12,63).